Consider the following 304-residue polypeptide: GTP cyclohydrolase FolE2 (304 aa).

It belongs to the GTP cyclohydrolase IV family.

The enzyme catalyses GTP + H2O = 7,8-dihydroneopterin 3'-triphosphate + formate + H(+). The protein operates within cofactor biosynthesis; 7,8-dihydroneopterin triphosphate biosynthesis; 7,8-dihydroneopterin triphosphate from GTP: step 1/1. Functionally, converts GTP to 7,8-dihydroneopterin triphosphate. This is GTP cyclohydrolase FolE2 (folE2) from Bacillus subtilis (strain 168).